We begin with the raw amino-acid sequence, 919 residues long: Kinesin-like protein KIN-UA (919 aa).

The segment at 1 to 68 (MSTTSGTGGV…SGGGGDAGVP (68 aa)) is disordered. Positions 15–51 (GTQRSSLRTQSSASTSSGGQKASVKSKSVLRKSSPAA) are enriched in low complexity. Residues 52–66 (LGGGSSKSGGGGDAG) are compositionally biased toward gly residues. The Kinesin motor domain occupies 70 to 412 (RVRVAVRLRP…IMFGQRAMKV (343 aa)). Position 155–162 (155–162 (GQTGTGKT)) interacts with ATP. The tract at residues 286–305 (TRDGLSSESNGNSHMTKSLK) is disordered. A compositionally biased stretch (polar residues) spans 291 to 301 (SSESNGNSHMT). Residues 382-390 (RTSLVITIG) carry the D-BOX motif. 2 coiled-coil regions span residues 428–492 (SRRL…SIKK) and 530–621 (ALEE…LEQH). ARM repeat units follow at residues 650-689 (KPPV…NLAA), 691-731 (EANQ…NLAM), 733-773 (ETNQ…NLCG), and 775-814 (DKLQ…NFAK).

Belongs to the TRAFAC class myosin-kinesin ATPase superfamily. Kinesin family. Ungrouped subfamily. Interacts (via C-terminus) with NEK5. As to expression, expressed in leaves, guard cells, trichomes, vascular tissues, stele of the root tip region and columella cells. Highest expression detected in guard cells.

It localises to the cytoplasm. The protein localises to the cytoskeleton. This Arabidopsis thaliana (Mouse-ear cress) protein is Kinesin-like protein KIN-UA.